A 446-amino-acid polypeptide reads, in one-letter code: Histidine--tRNA ligase (446 aa).

This sequence belongs to the class-II aminoacyl-tRNA synthetase family. As to quaternary structure, homodimer.

It is found in the cytoplasm. It catalyses the reaction tRNA(His) + L-histidine + ATP = L-histidyl-tRNA(His) + AMP + diphosphate + H(+). The sequence is that of Histidine--tRNA ligase from Burkholderia cenocepacia (strain HI2424).